Consider the following 262-residue polypeptide: Sulfur carrier protein FdhD (262 aa).

The active-site Cysteine persulfide intermediate is Cys107.

The protein belongs to the FdhD family.

It is found in the cytoplasm. In terms of biological role, required for formate dehydrogenase (FDH) activity. Acts as a sulfur carrier protein that transfers sulfur from IscS to the molybdenum cofactor prior to its insertion into FDH. This is Sulfur carrier protein FdhD from Bacillus pumilus (strain SAFR-032).